A 78-amino-acid polypeptide reads, in one-letter code: UPF0270 protein ECA4061 (78 aa).

It belongs to the UPF0270 family.

The protein is UPF0270 protein ECA4061 of Pectobacterium atrosepticum (strain SCRI 1043 / ATCC BAA-672) (Erwinia carotovora subsp. atroseptica).